The chain runs to 206 residues: Outer-membrane lipoprotein carrier protein (206 aa).

The N-terminal stretch at 1–20 is a signal peptide; that stretch reads MRLIRMLLPVLALTTLTAHA.

Belongs to the LolA family. As to quaternary structure, monomer.

Its subcellular location is the periplasm. In terms of biological role, participates in the translocation of lipoproteins from the inner membrane to the outer membrane. Only forms a complex with a lipoprotein if the residue after the N-terminal Cys is not an aspartate (The Asp acts as a targeting signal to indicate that the lipoprotein should stay in the inner membrane). The sequence is that of Outer-membrane lipoprotein carrier protein from Pseudomonas fluorescens (strain Pf0-1).